The following is a 310-amino-acid chain: Proline iminopeptidase (310 aa).

The AB hydrolase-1 domain maps to 33–290; the sequence is PVIFLHGGPG…RVVQAGHCAF (258 aa). Ser107 serves as the catalytic Nucleophile. The active site involves Asp260. His287 serves as the catalytic Proton donor.

It belongs to the peptidase S33 family.

It is found in the cytoplasm. The enzyme catalyses Release of N-terminal proline from a peptide.. Hydrolyzes peptides having the structure Pro-Y-Z to yield free proline. Also hydrolyzes the dipeptide Pro-Gly. The chain is Proline iminopeptidase (pip) from Neisseria gonorrhoeae.